The following is a 105-amino-acid chain: Large ribosomal subunit protein bL21 (105 aa).

This sequence belongs to the bacterial ribosomal protein bL21 family. In terms of assembly, part of the 50S ribosomal subunit. Contacts protein L20.

Its function is as follows. This protein binds to 23S rRNA in the presence of protein L20. The chain is Large ribosomal subunit protein bL21 from Parafrankia sp. (strain EAN1pec).